The primary structure comprises 35 residues: Anti-H(O) lectin 3 (35 aa).

The protein belongs to the leguminous lectin family. Homodimer. In terms of processing, highly glycosylated.

Functionally, binds lactose or galactose. This is Anti-H(O) lectin 3 from Ulex europaeus (Furze).